Consider the following 226-residue polypeptide: Imidazole glycerol phosphate synthase subunit HisH (226 aa).

The Glutamine amidotransferase type-1 domain occupies 6-214 (NIALVDYGVG…VERAASRSAA (209 aa)). Catalysis depends on C84, which acts as the Nucleophile. Catalysis depends on residues H189 and E191.

As to quaternary structure, heterodimer of HisH and HisF.

Its subcellular location is the cytoplasm. It carries out the reaction 5-[(5-phospho-1-deoxy-D-ribulos-1-ylimino)methylamino]-1-(5-phospho-beta-D-ribosyl)imidazole-4-carboxamide + L-glutamine = D-erythro-1-(imidazol-4-yl)glycerol 3-phosphate + 5-amino-1-(5-phospho-beta-D-ribosyl)imidazole-4-carboxamide + L-glutamate + H(+). It catalyses the reaction L-glutamine + H2O = L-glutamate + NH4(+). It functions in the pathway amino-acid biosynthesis; L-histidine biosynthesis; L-histidine from 5-phospho-alpha-D-ribose 1-diphosphate: step 5/9. IGPS catalyzes the conversion of PRFAR and glutamine to IGP, AICAR and glutamate. The HisH subunit catalyzes the hydrolysis of glutamine to glutamate and ammonia as part of the synthesis of IGP and AICAR. The resulting ammonia molecule is channeled to the active site of HisF. This Gloeobacter violaceus (strain ATCC 29082 / PCC 7421) protein is Imidazole glycerol phosphate synthase subunit HisH.